A 492-amino-acid polypeptide reads, in one-letter code: GTPase Der (492 aa).

EngA-type G domains follow at residues 3–167 (FTLA…DAYA) and 201–381 (LQVA…EVWN). Residues 9-16 (GRPNVGKS), 56-60 (DTAGL), 119-122 (NKAE), 207-214 (GRPNAGKS), 259-263 (DTAGM), and 324-327 (NKWD) contribute to the GTP site. In terms of domain architecture, KH-like spans 382–468 (RRVTTAQLNR…RLWMRGQNDA (87 aa)). A disordered region spans residues 462 to 492 (MRGQNDANPYKGRKKAPPSKLRKHTDGRRKD). Residues 472-492 (KGRKKAPPSKLRKHTDGRRKD) are compositionally biased toward basic residues.

The protein belongs to the TRAFAC class TrmE-Era-EngA-EngB-Septin-like GTPase superfamily. EngA (Der) GTPase family. Associates with the 50S ribosomal subunit.

Its function is as follows. GTPase that plays an essential role in the late steps of ribosome biogenesis. The chain is GTPase Der from Roseobacter denitrificans (strain ATCC 33942 / OCh 114) (Erythrobacter sp. (strain OCh 114)).